Reading from the N-terminus, the 297-residue chain is Ribosomal RNA small subunit methyltransferase H (297 aa).

S-adenosyl-L-methionine contacts are provided by residues 37–39 (GGH), E56, F87, D102, and H109.

This sequence belongs to the methyltransferase superfamily. RsmH family.

Its subcellular location is the cytoplasm. It carries out the reaction cytidine(1402) in 16S rRNA + S-adenosyl-L-methionine = N(4)-methylcytidine(1402) in 16S rRNA + S-adenosyl-L-homocysteine + H(+). Specifically methylates the N4 position of cytidine in position 1402 (C1402) of 16S rRNA. The chain is Ribosomal RNA small subunit methyltransferase H from Borrelia duttonii (strain Ly).